Here is a 231-residue protein sequence, read N- to C-terminus: Uridylate kinase (231 aa).

Position 9 to 12 (9 to 12 (KLSG)) interacts with ATP. Glycine 49 serves as a coordination point for UMP. 2 residues coordinate ATP: glycine 50 and arginine 54. UMP-binding positions include aspartate 69 and 130–137 (AGMPYFST). Residues asparagine 158, tyrosine 164, and aspartate 167 each coordinate ATP.

The protein belongs to the UMP kinase family. As to quaternary structure, homohexamer.

Its subcellular location is the cytoplasm. The enzyme catalyses UMP + ATP = UDP + ADP. It functions in the pathway pyrimidine metabolism; CTP biosynthesis via de novo pathway; UDP from UMP (UMPK route): step 1/1. With respect to regulation, inhibited by UTP. Functionally, catalyzes the reversible phosphorylation of UMP to UDP. The polypeptide is Uridylate kinase (Tropheryma whipplei (strain Twist) (Whipple's bacillus)).